A 221-amino-acid chain; its full sequence is Endo-1,4-beta-xylanase 1 (221 aa).

An N-terminal signal peptide occupies residues 1–22 (MKFFATIAALVVAAVAAPVAEA). The GH11 domain occupies 29–221 (PMLIERAGPG…GTGSASVTVS (193 aa)). The active-site Nucleophile is the Glu-114. The Proton donor role is filled by Glu-208.

The protein belongs to the glycosyl hydrolase 11 (cellulase G) family.

Its subcellular location is the secreted. It catalyses the reaction Endohydrolysis of (1-&gt;4)-beta-D-xylosidic linkages in xylans.. It functions in the pathway glycan degradation; xylan degradation. Its function is as follows. Endo-1,4-beta-xylanase involved in the hydrolysis of xylan, a major structural heterogeneous polysaccharide found in plant biomass representing the second most abundant polysaccharide in the biosphere, after cellulose. Hydrolyzes xylans from oat spelt and birchwood at similar rates, but it has no detectable activity toward Avicel or carboxymethyl cellulose. The sequence is that of Endo-1,4-beta-xylanase 1 (xynI) from Aureobasidium pullulans (Black yeast).